Consider the following 127-residue polypeptide: Protein translocase subunit SecE (127 aa).

Transmembrane regions (helical) follow at residues 17 to 37 (VKWISISIFFILSFFINMCFY), 41 to 61 (LFIRIFIISCLMLCAIGTMIY), and 95 to 115 (FIVISVTIFISFILWSIDSVI).

This sequence belongs to the SecE/SEC61-gamma family. In terms of assembly, component of the Sec protein translocase complex. Heterotrimer consisting of SecY, SecE and SecG subunits. The heterotrimers can form oligomers, although 1 heterotrimer is thought to be able to translocate proteins. Interacts with the ribosome. Interacts with SecDF, and other proteins may be involved. Interacts with SecA.

The protein resides in the cell inner membrane. Functionally, essential subunit of the Sec protein translocation channel SecYEG. Clamps together the 2 halves of SecY. May contact the channel plug during translocation. This chain is Protein translocase subunit SecE, found in Buchnera aphidicola subsp. Acyrthosiphon pisum (strain APS) (Acyrthosiphon pisum symbiotic bacterium).